The chain runs to 523 residues: Bifunctional purine biosynthesis protein PurH (523 aa).

The 154-residue stretch at 1–154 folds into the MGS-like domain; that stretch reads MTATAGSNKR…KNHPSVAVVT (154 aa).

It belongs to the PurH family.

The catalysed reaction is (6R)-10-formyltetrahydrofolate + 5-amino-1-(5-phospho-beta-D-ribosyl)imidazole-4-carboxamide = 5-formamido-1-(5-phospho-D-ribosyl)imidazole-4-carboxamide + (6S)-5,6,7,8-tetrahydrofolate. The enzyme catalyses IMP + H2O = 5-formamido-1-(5-phospho-D-ribosyl)imidazole-4-carboxamide. The protein operates within purine metabolism; IMP biosynthesis via de novo pathway; 5-formamido-1-(5-phospho-D-ribosyl)imidazole-4-carboxamide from 5-amino-1-(5-phospho-D-ribosyl)imidazole-4-carboxamide (10-formyl THF route): step 1/1. It functions in the pathway purine metabolism; IMP biosynthesis via de novo pathway; IMP from 5-formamido-1-(5-phospho-D-ribosyl)imidazole-4-carboxamide: step 1/1. In Streptomyces coelicolor (strain ATCC BAA-471 / A3(2) / M145), this protein is Bifunctional purine biosynthesis protein PurH.